The chain runs to 261 residues: Cytochrome c oxidase subunit 3 (261 aa).

Residues 1-15 lie on the Mitochondrial matrix side of the membrane; that stretch reads MTHQTHAYHMVNPSP. A helical transmembrane segment spans residues 16–34; that stretch reads WPLTGALSALLMTSGLVMW. Over 35-40 the chain is Mitochondrial intermembrane; it reads FHYNST. Residues 41 to 66 traverse the membrane as a helical segment; sequence LLLTLGLTTNLLTMYQWWRDIIREST. Residues 67-72 lie on the Mitochondrial matrix side of the membrane; sequence FQGHHT. A helical membrane pass occupies residues 73 to 105; that stretch reads PAVQKGLRYGMILFIISEVFFFSGFFWAFYHSS. Residues 106–128 lie on the Mitochondrial intermembrane side of the membrane; it reads LAPTPELGGCWPPTGIHPLNPME. A helical transmembrane segment spans residues 129 to 152; that stretch reads VPLLNTSVLLASGVSITWAHHSLM. At 153–155 the chain is on the mitochondrial matrix side; that stretch reads EGN. Residues 156-183 form a helical membrane-spanning segment; it reads RKHMLQALFITISLGIYFTLLQASEYYE. The Mitochondrial intermembrane portion of the chain corresponds to 184–190; that stretch reads APFTISD. A helical membrane pass occupies residues 191–223; that stretch reads GVYGSTFFVATGFHGLHVIIGSTFLIVCFLRQL. Residues 224-232 are Mitochondrial matrix-facing; that stretch reads KFHFTSNHH. Residues 233–256 form a helical membrane-spanning segment; the sequence is FGFEAAAWYWHFVDVVWLFLYVSI. At 257-261 the chain is on the mitochondrial intermembrane side; sequence YWWGS.

It belongs to the cytochrome c oxidase subunit 3 family. As to quaternary structure, component of the cytochrome c oxidase (complex IV, CIV), a multisubunit enzyme composed of 14 subunits. The complex is composed of a catalytic core of 3 subunits MT-CO1, MT-CO2 and MT-CO3, encoded in the mitochondrial DNA, and 11 supernumerary subunits COX4I, COX5A, COX5B, COX6A, COX6B, COX6C, COX7A, COX7B, COX7C, COX8 and NDUFA4, which are encoded in the nuclear genome. The complex exists as a monomer or a dimer and forms supercomplexes (SCs) in the inner mitochondrial membrane with NADH-ubiquinone oxidoreductase (complex I, CI) and ubiquinol-cytochrome c oxidoreductase (cytochrome b-c1 complex, complex III, CIII), resulting in different assemblies (supercomplex SCI(1)III(2)IV(1) and megacomplex MCI(2)III(2)IV(2)).

Its subcellular location is the mitochondrion inner membrane. It carries out the reaction 4 Fe(II)-[cytochrome c] + O2 + 8 H(+)(in) = 4 Fe(III)-[cytochrome c] + 2 H2O + 4 H(+)(out). Component of the cytochrome c oxidase, the last enzyme in the mitochondrial electron transport chain which drives oxidative phosphorylation. The respiratory chain contains 3 multisubunit complexes succinate dehydrogenase (complex II, CII), ubiquinol-cytochrome c oxidoreductase (cytochrome b-c1 complex, complex III, CIII) and cytochrome c oxidase (complex IV, CIV), that cooperate to transfer electrons derived from NADH and succinate to molecular oxygen, creating an electrochemical gradient over the inner membrane that drives transmembrane transport and the ATP synthase. Cytochrome c oxidase is the component of the respiratory chain that catalyzes the reduction of oxygen to water. Electrons originating from reduced cytochrome c in the intermembrane space (IMS) are transferred via the dinuclear copper A center (CU(A)) of subunit 2 and heme A of subunit 1 to the active site in subunit 1, a binuclear center (BNC) formed by heme A3 and copper B (CU(B)). The BNC reduces molecular oxygen to 2 water molecules using 4 electrons from cytochrome c in the IMS and 4 protons from the mitochondrial matrix. The sequence is that of Cytochrome c oxidase subunit 3 (MT-CO3) from Rhinoceros unicornis (Greater Indian rhinoceros).